The following is a 441-amino-acid chain: UDP-N-acetylmuramoylalanine--D-glutamate ligase (441 aa).

ATP is bound at residue Gly-112 to Thr-118.

The protein belongs to the MurCDEF family.

Its subcellular location is the cytoplasm. The catalysed reaction is UDP-N-acetyl-alpha-D-muramoyl-L-alanine + D-glutamate + ATP = UDP-N-acetyl-alpha-D-muramoyl-L-alanyl-D-glutamate + ADP + phosphate + H(+). Its pathway is cell wall biogenesis; peptidoglycan biosynthesis. In terms of biological role, cell wall formation. Catalyzes the addition of glutamate to the nucleotide precursor UDP-N-acetylmuramoyl-L-alanine (UMA). This chain is UDP-N-acetylmuramoylalanine--D-glutamate ligase, found in Gloeobacter violaceus (strain ATCC 29082 / PCC 7421).